A 267-amino-acid polypeptide reads, in one-letter code: Type II pantothenate kinase (267 aa).

6 to 13 contacts ATP; sequence DAGGTLIK. Residue glutamate 70 is the Proton acceptor of the active site. Residues threonine 99, 121-125, tyrosine 137, and serine 225 each bind ATP; that span reads GGMIQ.

This sequence belongs to the type II pantothenate kinase family. In terms of assembly, homodimer.

The protein localises to the cytoplasm. The catalysed reaction is (R)-pantothenate + ATP = (R)-4'-phosphopantothenate + ADP + H(+). It functions in the pathway cofactor biosynthesis; coenzyme A biosynthesis; CoA from (R)-pantothenate: step 1/5. In terms of biological role, catalyzes the phosphorylation of pantothenate (Pan), the first step in CoA biosynthesis. In Staphylococcus aureus (strain Mu50 / ATCC 700699), this protein is Type II pantothenate kinase.